Here is a 260-residue protein sequence, read N- to C-terminus: Coiled-coil domain-containing protein 127 (260 aa).

A coiled-coil region spans residues 49–135; sequence QKEVEKEREA…QVMQEKRQVQ (87 aa).

The sequence is that of Coiled-coil domain-containing protein 127 (CCDC127) from Homo sapiens (Human).